The primary structure comprises 869 residues: Bifunctional uridylyltransferase/uridylyl-removing enzyme (869 aa).

A uridylyltransferase region spans residues 1-332; it reads MTDTPAERPD…QFDGEATPEP (332 aa). Residues 333–691 are uridylyl-removing; that stretch reads LGGGFSLRRG…RRAVPDNDAL (359 aa). The HD domain maps to 450–572; sequence VDQHTLMVLR…VGTRERLDYL (123 aa). 2 consecutive ACT domains span residues 692 to 774 and 798 to 869; these read EVFV…RAVP and RISL…LDPV.

It belongs to the GlnD family. Mg(2+) is required as a cofactor.

It catalyses the reaction [protein-PII]-L-tyrosine + UTP = [protein-PII]-uridylyl-L-tyrosine + diphosphate. The enzyme catalyses [protein-PII]-uridylyl-L-tyrosine + H2O = [protein-PII]-L-tyrosine + UMP + H(+). Uridylyltransferase (UTase) activity is inhibited by glutamine, while glutamine activates uridylyl-removing (UR) activity. Its function is as follows. Modifies, by uridylylation and deuridylylation, the PII regulatory proteins (GlnB and homologs), in response to the nitrogen status of the cell that GlnD senses through the glutamine level. Under low glutamine levels, catalyzes the conversion of the PII proteins and UTP to PII-UMP and PPi, while under higher glutamine levels, GlnD hydrolyzes PII-UMP to PII and UMP (deuridylylation). Thus, controls uridylylation state and activity of the PII proteins, and plays an important role in the regulation of nitrogen assimilation and metabolism. The chain is Bifunctional uridylyltransferase/uridylyl-removing enzyme from Xanthomonas euvesicatoria pv. vesicatoria (strain 85-10) (Xanthomonas campestris pv. vesicatoria).